Consider the following 30-residue polypeptide: V-type proton ATPase catalytic subunit A isoform 2 (30 aa).

The protein belongs to the ATPase alpha/beta chains family. V-ATPase is a heteromultimeric enzyme composed of a peripheral catalytic V1 complex (main components: subunits A, B, C, D, E, and F) attached to an integral membrane V0 proton pore complex (main component: the proteolipid protein).

It carries out the reaction ATP + H2O + 4 H(+)(in) = ADP + phosphate + 5 H(+)(out). Its function is as follows. Catalytic subunit of the peripheral V1 complex of vacuolar ATPase. V-ATPase vacuolar ATPase is responsible for acidifying a variety of intracellular compartments in eukaryotic cells. This is V-type proton ATPase catalytic subunit A isoform 2 from Equisetum arvense (Field horsetail).